The sequence spans 536 residues: Proto-oncogene tyrosine-protein kinase Yrk (536 aa).

The N-myristoyl glycine moiety is linked to residue G2. S-palmitoyl cysteine attachment occurs at residues C3 and C6. The interval 10-36 (ISGKGQGGSGTGTPAHPPSQYDPDPTQ) is disordered. Residues 81–142 (GGVTLFIALY…PSNYVAPVDS (62 aa)) form the SH3 domain. Residues 148 to 245 (WYFGKIGRKD…GLCCRLAVPC (98 aa)) form the SH2 domain. Positions 270–523 (LQLLQKLGNG…YLQSFLEDYF (254 aa)) constitute a Protein kinase domain. Residues 276–284 (LGNGQFGEV) and K298 contribute to the ATP site. D389 acts as the Proton acceptor in catalysis. Position 419 is a phosphotyrosine; by autocatalysis (Y419). Y530 carries the phosphotyrosine modification.

This sequence belongs to the protein kinase superfamily. Tyr protein kinase family. SRC subfamily. In terms of processing, phosphorylated. In terms of tissue distribution, there are elevated levels of this protein in neural and hematopoietic tissues.

The enzyme catalyses L-tyrosyl-[protein] + ATP = O-phospho-L-tyrosyl-[protein] + ADP + H(+). Functionally, may participate in signaling pathways. The polypeptide is Proto-oncogene tyrosine-protein kinase Yrk (YRK) (Gallus gallus (Chicken)).